The sequence spans 361 residues: Ribosomal RNA large subunit methyltransferase M (361 aa).

Residues Ser187, 220 to 223 (CPGG), Asp239, Asp259, and Asp276 each bind S-adenosyl-L-methionine. Lys305 (proton acceptor) is an active-site residue.

The protein belongs to the class I-like SAM-binding methyltransferase superfamily. RNA methyltransferase RlmE family. RlmM subfamily. In terms of assembly, monomer.

The protein localises to the cytoplasm. The catalysed reaction is cytidine(2498) in 23S rRNA + S-adenosyl-L-methionine = 2'-O-methylcytidine(2498) in 23S rRNA + S-adenosyl-L-homocysteine + H(+). In terms of biological role, catalyzes the 2'-O-methylation at nucleotide C2498 in 23S rRNA. In Shewanella sp. (strain ANA-3), this protein is Ribosomal RNA large subunit methyltransferase M.